The sequence spans 198 residues: Recombination protein RecR (198 aa).

The C4-type zinc-finger motif lies at 57 to 72 (CRVCANIADENPCGIC). Residues 80–175 (GLICVVERPR…RVTRLAFGLP (96 aa)) enclose the Toprim domain.

It belongs to the RecR family.

Functionally, may play a role in DNA repair. It seems to be involved in an RecBC-independent recombinational process of DNA repair. It may act with RecF and RecO. The protein is Recombination protein RecR of Desulforudis audaxviator (strain MP104C).